Consider the following 602-residue polypeptide: Elongation factor 4 (602 aa).

Positions 7-189 (RNIRNFSIIA…AIVQRIPAPQ (183 aa)) constitute a tr-type G domain. Residues 19-24 (DHGKST) and 136-139 (NKID) contribute to the GTP site.

It belongs to the TRAFAC class translation factor GTPase superfamily. Classic translation factor GTPase family. LepA subfamily.

The protein resides in the cell inner membrane. It carries out the reaction GTP + H2O = GDP + phosphate + H(+). In terms of biological role, required for accurate and efficient protein synthesis under certain stress conditions. May act as a fidelity factor of the translation reaction, by catalyzing a one-codon backward translocation of tRNAs on improperly translocated ribosomes. Back-translocation proceeds from a post-translocation (POST) complex to a pre-translocation (PRE) complex, thus giving elongation factor G a second chance to translocate the tRNAs correctly. Binds to ribosomes in a GTP-dependent manner. The chain is Elongation factor 4 from Xylella fastidiosa (strain M12).